The following is a 293-amino-acid chain: MITFSSMLLKLQEFWMKQGCNIVQPYDIPAGAGTFHPATFLRSLDSTPWSVAYVAPSRRPTDGRYGENPNRLGSYYQFQALIKPSPDNIQELYLKSLEYLGLDVKNHDIRFVEDNWESPTLGAWGLGWEVWLNGMEVTQFTYFQQVGGIECNPVAVEITYGTERLAMYLQGVDTVFDIVWGENEHGKTLYRDVHKEAEIEFSKYNFEIADTEMLFAEFNAKSAECLKTIEARLPLPAYDLCMMAASTFNVLDARKAISQTERQNYILKIRELSKGCAELYKAQEEDRNKRVKG.

The protein belongs to the class-II aminoacyl-tRNA synthetase family. In terms of assembly, tetramer of two alpha and two beta subunits.

It localises to the cytoplasm. The enzyme catalyses tRNA(Gly) + glycine + ATP = glycyl-tRNA(Gly) + AMP + diphosphate. This Sulfurimonas denitrificans (strain ATCC 33889 / DSM 1251) (Thiomicrospira denitrificans (strain ATCC 33889 / DSM 1251)) protein is Glycine--tRNA ligase alpha subunit.